The sequence spans 334 residues: Probable tRNA pseudouridine synthase B (334 aa).

Residue Asp-82 is the Nucleophile of the active site. Residues 250-325 (LPKVWIRDSA…IAVDVDKVFM (76 aa)) enclose the PUA domain.

This sequence belongs to the pseudouridine synthase TruB family. Type 2 subfamily.

It catalyses the reaction uridine(55) in tRNA = pseudouridine(55) in tRNA. Could be responsible for synthesis of pseudouridine from uracil-55 in the psi GC loop of transfer RNAs. The polypeptide is Probable tRNA pseudouridine synthase B (Thermococcus gammatolerans (strain DSM 15229 / JCM 11827 / EJ3)).